The chain runs to 244 residues: Glutathione S-transferase theta-2B (244 aa).

The GST N-terminal domain occupies 2–82 (GLELFLDLVS…YLSCKYQTPD (81 aa)). Glutathione contacts are provided by residues 40 to 41 (HK), 53 to 54 (KL), 66 to 67 (ES), and 104 to 107 (DCIR). The GST C-terminal domain occupies 88-224 (DLQARARVHE…SILEQAAKKT (137 aa)).

Belongs to the GST superfamily. Theta family. Homodimer. Expressed at low levels in liver. In lung, expressed at low levels in ciliated bronchiolar cells, alveolar macrophages and alveolar type II cells.

The protein resides in the cytoplasm. It is found in the cytosol. The enzyme catalyses RX + glutathione = an S-substituted glutathione + a halide anion + H(+). Conjugation of reduced glutathione to a wide number of exogenous and endogenous hydrophobic electrophiles. Has a sulfatase activity. This chain is Glutathione S-transferase theta-2B (GSTT2B), found in Homo sapiens (Human).